A 142-amino-acid polypeptide reads, in one-letter code: Large ribosomal subunit protein cL37 alpha (142 aa).

Residues 1–62 (MALLSPLLSL…AQKRGTVVAM (62 aa)) constitute a chloroplast transit peptide. The disordered stretch occupies residues 123 to 142 (RKLRKRGAWPPSKMKKLKNV).

The protein belongs to the chloroplast-specific ribosomal protein cL37 family. In terms of assembly, component of the chloroplast large ribosomal subunit (LSU). Mature 70S chloroplast ribosomes of higher plants consist of a small (30S) and a large (50S) subunit. The 30S small subunit contains 1 molecule of ribosomal RNA (16S rRNA) and 24 different proteins. The 50S large subunit contains 3 rRNA molecules (23S, 5S and 4.5S rRNA) and 33 different proteins.

The protein resides in the plastid. It is found in the chloroplast. In terms of biological role, component of the chloroplast ribosome (chloro-ribosome), a dedicated translation machinery responsible for the synthesis of chloroplast genome-encoded proteins, including proteins of the transcription and translation machinery and components of the photosynthetic apparatus. In Spinacia oleracea (Spinach), this protein is Large ribosomal subunit protein cL37 alpha (PSRP5).